The chain runs to 277 residues: Large ribosomal subunit protein uL2 (277 aa).

Residues 226–277 (NPIDHPHGGGEGRTSGGRHPVTPWGKPTKGKKTRSNKSTNKFILISRHKRKK) form a disordered region.

The protein belongs to the universal ribosomal protein uL2 family. As to quaternary structure, part of the 50S ribosomal subunit. Forms a bridge to the 30S subunit in the 70S ribosome.

Functionally, one of the primary rRNA binding proteins. Required for association of the 30S and 50S subunits to form the 70S ribosome, for tRNA binding and peptide bond formation. It has been suggested to have peptidyltransferase activity; this is somewhat controversial. Makes several contacts with the 16S rRNA in the 70S ribosome. This is Large ribosomal subunit protein uL2 from Rhodopseudomonas palustris (strain BisA53).